Here is a 186-residue protein sequence, read N- to C-terminus: Translation initiation factor IF-3 (186 aa).

The protein belongs to the IF-3 family. Monomer.

The protein localises to the cytoplasm. Its function is as follows. IF-3 binds to the 30S ribosomal subunit and shifts the equilibrium between 70S ribosomes and their 50S and 30S subunits in favor of the free subunits, thus enhancing the availability of 30S subunits on which protein synthesis initiation begins. The sequence is that of Translation initiation factor IF-3 from Borreliella afzelii (strain PKo) (Borrelia afzelii).